The following is a 107-amino-acid chain: Nucleoid-associated protein BMEA_A0033 (107 aa).

It belongs to the YbaB/EbfC family. In terms of assembly, homodimer.

It localises to the cytoplasm. The protein localises to the nucleoid. Binds to DNA and alters its conformation. May be involved in regulation of gene expression, nucleoid organization and DNA protection. This chain is Nucleoid-associated protein BMEA_A0033, found in Brucella melitensis biotype 2 (strain ATCC 23457).